Consider the following 459-residue polypeptide: Putrescine aminotransferase (459 aa).

Pyridoxal 5'-phosphate contacts are provided by residues 150-151 (GT) and Gln274. The residue at position 300 (Lys300) is an N6-(pyridoxal phosphate)lysine. Thr332 lines the pyridoxal 5'-phosphate pocket.

The protein belongs to the class-III pyridoxal-phosphate-dependent aminotransferase family. Putrescine aminotransferase subfamily. Pyridoxal 5'-phosphate is required as a cofactor.

The enzyme catalyses an alkane-alpha,omega-diamine + 2-oxoglutarate = an omega-aminoaldehyde + L-glutamate. The catalysed reaction is putrescine + 2-oxoglutarate = 1-pyrroline + L-glutamate + H2O. It catalyses the reaction cadaverine + 2-oxoglutarate = 5-aminopentanal + L-glutamate. Its pathway is amine and polyamine degradation; putrescine degradation; 4-aminobutanal from putrescine (transaminase route): step 1/1. Catalyzes the aminotransferase reaction from putrescine to 2-oxoglutarate, leading to glutamate and 4-aminobutanal, which spontaneously cyclizes to form 1-pyrroline. This is the first step in one of two pathways for putrescine degradation, where putrescine is converted into 4-aminobutanoate (gamma-aminobutyrate or GABA) via 4-aminobutanal. Also functions as a cadaverine transaminase in a a L-lysine degradation pathway to succinate that proceeds via cadaverine, glutarate and L-2-hydroxyglutarate. The chain is Putrescine aminotransferase from Escherichia coli (strain K12 / MC4100 / BW2952).